The primary structure comprises 378 residues: Chaperone protein DnaJ (378 aa).

One can recognise a J domain in the interval 5–69 (EYYDRLGVSK…QKRAAYDQYG (65 aa)). Residues 134–216 (GVEKEVSYNR…CHGTGHEKQA (83 aa)) form a CR-type zinc finger. Residues C147, C150, C164, C167, C190, C193, C204, and C207 each contribute to the Zn(2+) site. CXXCXGXG motif repeat units follow at residues 147 to 154 (CGTCLGSG), 164 to 171 (CRKCHGSG), 190 to 197 (CDICHGSG), and 204 to 211 (CQTCHGTG).

The protein belongs to the DnaJ family. Homodimer. It depends on Zn(2+) as a cofactor.

Its subcellular location is the cytoplasm. Participates actively in the response to hyperosmotic and heat shock by preventing the aggregation of stress-denatured proteins and by disaggregating proteins, also in an autonomous, DnaK-independent fashion. Unfolded proteins bind initially to DnaJ; upon interaction with the DnaJ-bound protein, DnaK hydrolyzes its bound ATP, resulting in the formation of a stable complex. GrpE releases ADP from DnaK; ATP binding to DnaK triggers the release of the substrate protein, thus completing the reaction cycle. Several rounds of ATP-dependent interactions between DnaJ, DnaK and GrpE are required for fully efficient folding. Also involved, together with DnaK and GrpE, in the DNA replication of plasmids through activation of initiation proteins. This Streptococcus pyogenes serotype M6 (strain ATCC BAA-946 / MGAS10394) protein is Chaperone protein DnaJ.